An 825-amino-acid polypeptide reads, in one-letter code: Zinc finger protein 28 (825 aa).

Residues 26 to 65 (RPGGGPAAGTVVAPGSPDRGRPRSRNSLASQDQQGAVTSG) are disordered. A compositionally biased stretch (low complexity) spans 33–42 (AGTVVAPGSP). Residues 51–65 (NSLASQDQQGAVTSG) show a composition bias toward polar residues. The KRAB domain occupies 103 to 174 (VTFGDVAVVF…KRKMRKGQHL (72 aa)). C2H2-type zinc fingers lie at residues 377-399 (FQCN…QRIH), 405-427 (YKCN…QRCH), 433-456 (YECP…RYYH), 462-484 (FDCI…RRIH), 490-512 (YTCE…QRIH), 518-540 (YECE…QRVH), 546-568 (FKCK…WRIH), 574-596 (FECG…QRIH), 602-624 (YECK…QKTH), 630-652 (YECK…QRVH), 658-680 (YKCL…RRLH), 686-708 (YECV…RRCH), 714-736 (YECS…QRIH), and 742-764 (YECK…KRVH). The segment at 770-792 (YNYKKGRRAFRQTAHFAHHQQIH) adopts a C2H2-type 15; degenerate zinc-finger fold.

This sequence belongs to the krueppel C2H2-type zinc-finger protein family. Expressed predominantly in ovary.

It is found in the nucleus. May be involved in transcriptional regulation. May have a role in embryonic development. The chain is Zinc finger protein 28 (Zfp28) from Mus musculus (Mouse).